Reading from the N-terminus, the 875-residue chain is Serine/threonine-protein phosphatase 4 regulatory subunit 4 (875 aa).

HEAT repeat units lie at residues 215–253 (ILPL…TKNV) and 254–292 (VLPE…RSQT). A coiled-coil region spans residues 686–730 (MFQKKNYEKDLLDQEKEREELLFLEMEQLEKEKHQSDGRLASDKS). A compositionally biased stretch (basic and acidic residues) spans 718–739 (KHQSDGRLASDKSFEKKRRDSR). Positions 718–773 (KHQSDGRLASDKSFEKKRRDSRTSTQSLSKNLPISVPGPSSSTASTSKEIKKSKLT) are disordered. A compositionally biased stretch (polar residues) spans 740–764 (TSTQSLSKNLPISVPGPSSSTASTS). Serine 777 carries the post-translational modification Phosphoserine. The residue at position 799 (threonine 799) is a Phosphothreonine. A compositionally biased stretch (polar residues) spans 825 to 859 (RNASSVPASFSPNPVMPSTSRGPGNTADPKSSGSK). Residues 825-875 (RNASSVPASFSPNPVMPSTSRGPGNTADPKSSGSKDAQPRKATLKSRKSNP) are disordered. The segment covering 866–875 (ATLKSRKSNP) has biased composition (basic residues).

In terms of assembly, serine/threonine-protein phosphatase 4 (PP4) occurs in different assemblies of the catalytic and one or more regulatory subunits. Component of the PP4 complex PPP4C-PPP4R4.

The protein resides in the cytoplasm. Functionally, putative regulatory subunit of serine/threonine-protein phosphatase 4. In Mus musculus (Mouse), this protein is Serine/threonine-protein phosphatase 4 regulatory subunit 4 (Ppp4r4).